The sequence spans 433 residues: Serine--tRNA ligase (433 aa).

Threonine 235–glutamate 237 serves as a coordination point for L-serine. Arginine 266–glutamate 268 contributes to the ATP binding site. Glutamate 289 lines the L-serine pocket. Glutamate 353–serine 356 serves as a coordination point for ATP. Serine 388 lines the L-serine pocket.

This sequence belongs to the class-II aminoacyl-tRNA synthetase family. Type-1 seryl-tRNA synthetase subfamily. Homodimer. The tRNA molecule binds across the dimer.

It localises to the cytoplasm. The catalysed reaction is tRNA(Ser) + L-serine + ATP = L-seryl-tRNA(Ser) + AMP + diphosphate + H(+). It carries out the reaction tRNA(Sec) + L-serine + ATP = L-seryl-tRNA(Sec) + AMP + diphosphate + H(+). The protein operates within aminoacyl-tRNA biosynthesis; selenocysteinyl-tRNA(Sec) biosynthesis; L-seryl-tRNA(Sec) from L-serine and tRNA(Sec): step 1/1. Functionally, catalyzes the attachment of serine to tRNA(Ser). Is also able to aminoacylate tRNA(Sec) with serine, to form the misacylated tRNA L-seryl-tRNA(Sec), which will be further converted into selenocysteinyl-tRNA(Sec). This is Serine--tRNA ligase from Burkholderia cepacia (Pseudomonas cepacia).